A 369-amino-acid chain; its full sequence is Cobalt-precorrin-5B C(1)-methyltransferase (369 aa).

This sequence belongs to the CbiD family.

It catalyses the reaction Co-precorrin-5B + S-adenosyl-L-methionine = Co-precorrin-6A + S-adenosyl-L-homocysteine. The protein operates within cofactor biosynthesis; adenosylcobalamin biosynthesis; cob(II)yrinate a,c-diamide from sirohydrochlorin (anaerobic route): step 6/10. Its function is as follows. Catalyzes the methylation of C-1 in cobalt-precorrin-5B to form cobalt-precorrin-6A. The polypeptide is Cobalt-precorrin-5B C(1)-methyltransferase (Leptospira borgpetersenii serovar Hardjo-bovis (strain JB197)).